The sequence spans 595 residues: Pyranose dehydrogenase (595 aa).

Residues 1 to 21 (MARFNARLFSIAILGFQVARS) form the signal peptide. N-linked (GlcNAc...) asparagine glycans are attached at residues N95 and N110. Position 123 is a tele-8alpha-FAD histidine (H123). N-linked (GlcNAc...) asparagine glycosylation is found at N195, N337, N367, N502, and N510. The Proton acceptor role is filled by H530. A glycan (N-linked (GlcNAc...) asparagine) is linked at N541. H574 is an active-site residue.

It belongs to the GMC oxidoreductase family. Monomer. Requires FAD as cofactor. Post-translationally, N-glycosylated.

The protein resides in the secreted. The enzyme catalyses pyranose + acceptor = pyranos-2-ulose + reduced acceptor.. It carries out the reaction pyranose + acceptor = pyranos-3-ulose + reduced acceptor.. It catalyses the reaction pyranose + acceptor = pyranos-2,3-diulose + reduced acceptor.. The catalysed reaction is a pyranoside + acceptor = a pyranosid-3-ulose + reduced acceptor.. The enzyme catalyses a pyranoside + acceptor = a pyranosid-3,4-diulose + reduced acceptor.. Catalyzes the single-oxidation or sequential double oxidation reaction of carbohydrates primarily at carbon-2 and/or carbon-3 with the concomitant reduction of the flavin. The enzyme exhibits a broad sugar substrate specificity, oxidizing different aldopyranoses to the corresponding C-1, C-2, C-3 or C-1,2, C-2,3 and C-3,4 (di)dehydro sugars with substrate-specific regioselectivity. Accepts only a narrow range of electron acceptors such as substituted benzoquinones and complexed metal ions and reacts extremely slowly with O(2) as acceptor. May play a role in the natural recycling of plant matter by oxidizing all major monosaccharides in lignocellulose and by reducing quinone compounds or reactive radical species generated during lignin depolymerization. This Agaricus campestris (Field mushroom) protein is Pyranose dehydrogenase.